The primary structure comprises 81 residues: ATP synthase subunit c, chloroplastic (81 aa).

2 helical membrane-spanning segments follow: residues 4-24 and 57-77; these read VISAASVIAAGLAVGLASIGP and LAFMEALTIYGLVVALALLFA.

This sequence belongs to the ATPase C chain family. As to quaternary structure, F-type ATPases have 2 components, F(1) - the catalytic core - and F(0) - the membrane proton channel. F(1) has five subunits: alpha(3), beta(3), gamma(1), delta(1), epsilon(1). F(0) has four main subunits: a(1), b(1), b'(1) and c(10-14). The alpha and beta chains form an alternating ring which encloses part of the gamma chain. F(1) is attached to F(0) by a central stalk formed by the gamma and epsilon chains, while a peripheral stalk is formed by the delta, b and b' chains.

The protein resides in the plastid. Its subcellular location is the chloroplast thylakoid membrane. In terms of biological role, f(1)F(0) ATP synthase produces ATP from ADP in the presence of a proton or sodium gradient. F-type ATPases consist of two structural domains, F(1) containing the extramembraneous catalytic core and F(0) containing the membrane proton channel, linked together by a central stalk and a peripheral stalk. During catalysis, ATP synthesis in the catalytic domain of F(1) is coupled via a rotary mechanism of the central stalk subunits to proton translocation. Key component of the F(0) channel; it plays a direct role in translocation across the membrane. A homomeric c-ring of between 10-14 subunits forms the central stalk rotor element with the F(1) delta and epsilon subunits. The protein is ATP synthase subunit c, chloroplastic of Zygnema circumcarinatum (Green alga).